Reading from the N-terminus, the 493-residue chain is 1-aminocyclopropane-1-carboxylate synthase 1 (493 aa).

K279 carries the N6-(pyridoxal phosphate)lysine modification.

It belongs to the class-I pyridoxal-phosphate-dependent aminotransferase family. Homodimer. Requires pyridoxal 5'-phosphate as cofactor.

The catalysed reaction is S-adenosyl-L-methionine = 1-aminocyclopropane-1-carboxylate + S-methyl-5'-thioadenosine + H(+). The protein operates within alkene biosynthesis; ethylene biosynthesis via S-adenosyl-L-methionine; ethylene from S-adenosyl-L-methionine: step 1/2. Its function is as follows. Catalyzes the formation of 1-aminocyclopropane-1-carboxylate, a direct precursor of ethylene in higher plants. The polypeptide is 1-aminocyclopropane-1-carboxylate synthase 1 (ACC1A) (Cucurbita pepo (Vegetable marrow)).